The sequence spans 1257 residues: Neurocan core protein (1257 aa).

The signal sequence occupies residues 1-22; that stretch reads MGAESVWASGLLVLWLLLLVSG. Residues 37 to 157 enclose the Ig-like V-type domain; that stretch reads HMLKSGSGPI…EQDLVTLEVT (121 aa). 5 cysteine pairs are disulfide-bonded: Cys58-Cys139, Cys181-Cys252, Cys205-Cys226, Cys279-Cys354, and Cys303-Cys324. A glycan (N-linked (GlcNAc...) asparagine) is linked at Asn121. Link domains follow at residues 159–254 and 258–356; these read VVFH…YCFA and GGEV…YCFR. An N-linked (GlcNAc...) asparagine glycan is attached at Asn339. Residues 361–391 form a disordered region; sequence TPQRGDSEIPSSGDEGEIVSAEGPPAPELKP. O-linked (Xyl...) (chondroitin sulfate) serine glycosylation is found at Ser380 and Ser410. Residues 447–459 are compositionally biased toward low complexity; sequence SSTGVPSPSSLGV. Disordered regions lie at residues 447-493, 550-610, and 683-707; these read SSTG…FQQQ, GSLG…AVPS, and GAEDPETPFQTTMAAPGEASHGSPE. The segment covering 464 to 473 has biased composition (polar residues); the sequence is TTPSGTQVAP. The segment covering 569–580 has biased composition (low complexity); the sequence is SPSTVPSTDSTP. Asn737 carries an N-linked (GlcNAc...) asparagine glycan. O-linked (Xyl...) (chondroitin sulfate) serine glycosylation occurs at Ser944. An EGF-like 1 domain is found at 949 to 985; sequence PTDPCENNPCLHGGTCRTNGTMYGCSCDQGYAGENCE. 11 disulfide bridges follow: Cys953–Cys964, Cys958–Cys973, Cys975–Cys984, Cys991–Cys1002, Cys996–Cys1011, Cys1013–Cys1022, Cys1029–Cys1040, Cys1057–Cys1149, Cys1125–Cys1141, Cys1156–Cys1199, and Cys1185–Cys1212. N-linked (GlcNAc...) asparagine glycosylation occurs at Asn967. Residues 987-1023 enclose the EGF-like 2; calcium-binding domain; that stretch reads DIDDCLCSPCENGGTCIDEVNGFICLCLPSYGGNLCE. In terms of domain architecture, C-type lectin spans 1025 to 1154; it reads DTEGCDRGWH…LPYVCKKGTV (130 aa). Positions 1154 to 1214 constitute a Sushi domain; that stretch reads VLCGPPPAVE…WDRPQIVCTK (61 aa). Residue Asn1164 is glycosylated (N-linked (GlcNAc...) asparagine). Over residues 1215–1244 the composition is skewed to basic residues; that stretch reads PRRSHRMRRHHHHPHRHHKPRKEHRKHKRH. Residues 1215–1257 form a disordered region; sequence PRRSHRMRRHHHHPHRHHKPRKEHRKHKRHPAEDWEKDEGDFC.

The protein belongs to the aggrecan/versican proteoglycan family. Two isoforms were found that probably arise by proteolytic processing. The large isoform is predominant in early postnatal brain, the small isoform is found in adult brain. Post-translationally, O-glycosylated; contains chondroitin sulfate. As to expression, early postnatal and adult brain; not expressed in kidney, lung, liver and muscle.

Its subcellular location is the secreted. May modulate neuronal adhesion and neurite growth during development by binding to neural cell adhesion molecules (NG-CAM and N-CAM). Chondroitin sulfate proteoglycan; binds to hyaluronic acid. The sequence is that of Neurocan core protein (Ncan) from Rattus norvegicus (Rat).